A 133-amino-acid polypeptide reads, in one-letter code: Small ribosomal subunit protein uS8 (133 aa).

The protein belongs to the universal ribosomal protein uS8 family. In terms of assembly, part of the 30S ribosomal subunit. Contacts proteins S5 and S12.

In terms of biological role, one of the primary rRNA binding proteins, it binds directly to 16S rRNA central domain where it helps coordinate assembly of the platform of the 30S subunit. The protein is Small ribosomal subunit protein uS8 of Protochlamydia amoebophila (strain UWE25).